Reading from the N-terminus, the 92-residue chain is Signal recognition particle 19 kDa protein (92 aa).

The protein belongs to the SRP19 family. As to quaternary structure, part of the signal recognition particle protein translocation system, which is composed of SRP and FtsY. Archaeal SRP consists of a 7S RNA molecule of 300 nucleotides and two protein subunits: SRP54 and SRP19.

It is found in the cytoplasm. Involved in targeting and insertion of nascent membrane proteins into the cytoplasmic membrane. Binds directly to 7S RNA and mediates binding of the 54 kDa subunit of the SRP. This Methanosphaera stadtmanae (strain ATCC 43021 / DSM 3091 / JCM 11832 / MCB-3) protein is Signal recognition particle 19 kDa protein.